Consider the following 219-residue polypeptide: Uracil-DNA glycosylase (219 aa).

D59 functions as the Proton acceptor in the catalytic mechanism.

This sequence belongs to the uracil-DNA glycosylase (UDG) superfamily. UNG family.

Its subcellular location is the cytoplasm. It catalyses the reaction Hydrolyzes single-stranded DNA or mismatched double-stranded DNA and polynucleotides, releasing free uracil.. Its function is as follows. Excises uracil residues from the DNA which can arise as a result of misincorporation of dUMP residues by DNA polymerase or due to deamination of cytosine. This Macrococcus caseolyticus (strain JCSC5402) (Macrococcoides caseolyticum) protein is Uracil-DNA glycosylase.